Here is a 213-residue protein sequence, read N- to C-terminus: NADH-quinone oxidoreductase subunit B 1 (213 aa).

[4Fe-4S] cluster contacts are provided by Cys82, Cys83, Cys148, and Cys177.

The protein belongs to the complex I 20 kDa subunit family. NDH-1 is composed of 14 different subunits. Subunits NuoB, C, D, E, F, and G constitute the peripheral sector of the complex. The cofactor is [4Fe-4S] cluster.

The protein localises to the cell inner membrane. The enzyme catalyses a quinone + NADH + 5 H(+)(in) = a quinol + NAD(+) + 4 H(+)(out). Its function is as follows. NDH-1 shuttles electrons from NADH, via FMN and iron-sulfur (Fe-S) centers, to quinones in the respiratory chain. The immediate electron acceptor for the enzyme in this species is believed to be ubiquinone. Couples the redox reaction to proton translocation (for every two electrons transferred, four hydrogen ions are translocated across the cytoplasmic membrane), and thus conserves the redox energy in a proton gradient. The polypeptide is NADH-quinone oxidoreductase subunit B 1 (Koribacter versatilis (strain Ellin345)).